The chain runs to 155 residues: SsrA-binding protein (155 aa).

This sequence belongs to the SmpB family.

It localises to the cytoplasm. Its function is as follows. Required for rescue of stalled ribosomes mediated by trans-translation. Binds to transfer-messenger RNA (tmRNA), required for stable association of tmRNA with ribosomes. tmRNA and SmpB together mimic tRNA shape, replacing the anticodon stem-loop with SmpB. tmRNA is encoded by the ssrA gene; the 2 termini fold to resemble tRNA(Ala) and it encodes a 'tag peptide', a short internal open reading frame. During trans-translation Ala-aminoacylated tmRNA acts like a tRNA, entering the A-site of stalled ribosomes, displacing the stalled mRNA. The ribosome then switches to translate the ORF on the tmRNA; the nascent peptide is terminated with the 'tag peptide' encoded by the tmRNA and targeted for degradation. The ribosome is freed to recommence translation, which seems to be the essential function of trans-translation. The polypeptide is SsrA-binding protein (Ligilactobacillus salivarius (strain UCC118) (Lactobacillus salivarius)).